A 318-amino-acid polypeptide reads, in one-letter code: Acetyl-coenzyme A carboxylase carboxyl transferase subunit alpha (318 aa).

Positions Asn-32–Arg-293 constitute a CoA carboxyltransferase C-terminal domain.

This sequence belongs to the AccA family. In terms of assembly, acetyl-CoA carboxylase is a heterohexamer composed of biotin carboxyl carrier protein (AccB), biotin carboxylase (AccC) and two subunits each of ACCase subunit alpha (AccA) and ACCase subunit beta (AccD).

It is found in the cytoplasm. It catalyses the reaction N(6)-carboxybiotinyl-L-lysyl-[protein] + acetyl-CoA = N(6)-biotinyl-L-lysyl-[protein] + malonyl-CoA. The protein operates within lipid metabolism; malonyl-CoA biosynthesis; malonyl-CoA from acetyl-CoA: step 1/1. Functionally, component of the acetyl coenzyme A carboxylase (ACC) complex. First, biotin carboxylase catalyzes the carboxylation of biotin on its carrier protein (BCCP) and then the CO(2) group is transferred by the carboxyltransferase to acetyl-CoA to form malonyl-CoA. This is Acetyl-coenzyme A carboxylase carboxyl transferase subunit alpha from Saccharophagus degradans (strain 2-40 / ATCC 43961 / DSM 17024).